The primary structure comprises 150 residues: MSKISQQNSTPGVNGISVIHTQAHASGLQQVPQLVPAGPGGGGKAVAPSKQSKKSSPMDRNSDEYRQRRERNNMAVKKSRLKSKQKAQDTLQRVNQLKEENERLEAKIKLLTKELSVLKDLFLEHAHNLADNVQSISTENTTADGDNAGQ.

Residue Lys3 forms a Glycyl lysine isopeptide (Lys-Gly) (interchain with G-Cter in SUMO2) linkage. Positions 27–94 are disordered; it reads GLQQVPQLVP…QKAQDTLQRV (68 aa). Over residues 28–37 the composition is skewed to low complexity; the sequence is LQQVPQLVPA. The span at 56 to 72 shows a compositional bias: basic and acidic residues; sequence SPMDRNSDEYRQRRERN. The region spanning 62–125 is the bZIP domain; sequence SDEYRQRRER…SVLKDLFLEH (64 aa). Positions 66 to 93 are basic motif; the sequence is RQRRERNNMAVKKSRLKSKQKAQDTLQR. Residues 97–118 form a leucine-zipper region; sequence LKEENERLEAKIKLLTKELSVL.

It belongs to the bZIP family. C/EBP subfamily. Binds DNA as a dimer and can form stable heterodimers with CEBPA and CEBPB. Interacts with ZNF638; this interaction increases transcriptional activation.

Its subcellular location is the nucleus. Transcription factor that binds to the promoter and the enhancer regions of target genes. Binds to the enhancer element PRE-I (positive regulatory element-I) of the IL-4 gene. Binds to the promoter and the enhancer of the immunoglobulin heavy chain. Binds to GPE1, a cis-acting element in the G-CSF gene promoter. The protein is CCAAT/enhancer-binding protein gamma (CEBPG) of Homo sapiens (Human).